The chain runs to 348 residues: UDP-3-O-acylglucosamine N-acyltransferase (348 aa).

Histidine 241 serves as the catalytic Proton acceptor.

It belongs to the transferase hexapeptide repeat family. LpxD subfamily. As to quaternary structure, homotrimer.

It carries out the reaction a UDP-3-O-[(3R)-3-hydroxyacyl]-alpha-D-glucosamine + a (3R)-hydroxyacyl-[ACP] = a UDP-2-N,3-O-bis[(3R)-3-hydroxyacyl]-alpha-D-glucosamine + holo-[ACP] + H(+). The protein operates within bacterial outer membrane biogenesis; LPS lipid A biosynthesis. Its function is as follows. Catalyzes the N-acylation of UDP-3-O-acylglucosamine using 3-hydroxyacyl-ACP as the acyl donor. Is involved in the biosynthesis of lipid A, a phosphorylated glycolipid that anchors the lipopolysaccharide to the outer membrane of the cell. This Neisseria meningitidis serogroup C (strain 053442) protein is UDP-3-O-acylglucosamine N-acyltransferase.